Here is a 258-residue protein sequence, read N- to C-terminus: Probable S-methyl-5'-thioinosine phosphorylase (258 aa).

R53–H54 contacts phosphate. M180 is a binding site for substrate. T181 lines the phosphate pocket. N204–A206 serves as a coordination point for substrate.

The protein belongs to the PNP/MTAP phosphorylase family. MTAP subfamily. As to quaternary structure, homotrimer.

The catalysed reaction is S-methyl-5'-thioinosine + phosphate = 5-(methylsulfanyl)-alpha-D-ribose 1-phosphate + hypoxanthine. The protein operates within purine metabolism; purine nucleoside salvage. Its function is as follows. Catalyzes the reversible phosphorylation of S-methyl-5'-thioinosine (MTI) to hypoxanthine and 5-methylthioribose-1-phosphate. Involved in the breakdown of S-methyl-5'-thioadenosine (MTA), a major by-product of polyamine biosynthesis. Catabolism of (MTA) occurs via deamination to MTI and phosphorolysis to hypoxanthine. The protein is Probable S-methyl-5'-thioinosine phosphorylase of Methanosarcina acetivorans (strain ATCC 35395 / DSM 2834 / JCM 12185 / C2A).